A 751-amino-acid polypeptide reads, in one-letter code: Phosphoribosylformylglycinamidine synthase subunit PurL (751 aa).

Residue His-54 is part of the active site. ATP is bound by residues Tyr-57 and Lys-106. Glu-108 serves as a coordination point for Mg(2+). Residues 109 to 112 and Arg-131 each bind substrate; that span reads SHNH. His-110 functions as the Proton acceptor in the catalytic mechanism. Residue Asp-132 participates in Mg(2+) binding. Substrate is bound at residue Gln-256. Asp-284 serves as a coordination point for Mg(2+). 328-330 provides a ligand contact to substrate; it reads ESQ. ATP-binding residues include Asp-516 and Gly-553. Asn-554 lines the Mg(2+) pocket. Residue Ser-556 coordinates substrate.

It belongs to the FGAMS family. Monomer. Part of the FGAM synthase complex composed of 1 PurL, 1 PurQ and 2 PurS subunits.

Its subcellular location is the cytoplasm. The catalysed reaction is N(2)-formyl-N(1)-(5-phospho-beta-D-ribosyl)glycinamide + L-glutamine + ATP + H2O = 2-formamido-N(1)-(5-O-phospho-beta-D-ribosyl)acetamidine + L-glutamate + ADP + phosphate + H(+). It participates in purine metabolism; IMP biosynthesis via de novo pathway; 5-amino-1-(5-phospho-D-ribosyl)imidazole from N(2)-formyl-N(1)-(5-phospho-D-ribosyl)glycinamide: step 1/2. In terms of biological role, part of the phosphoribosylformylglycinamidine synthase complex involved in the purines biosynthetic pathway. Catalyzes the ATP-dependent conversion of formylglycinamide ribonucleotide (FGAR) and glutamine to yield formylglycinamidine ribonucleotide (FGAM) and glutamate. The FGAM synthase complex is composed of three subunits. PurQ produces an ammonia molecule by converting glutamine to glutamate. PurL transfers the ammonia molecule to FGAR to form FGAM in an ATP-dependent manner. PurS interacts with PurQ and PurL and is thought to assist in the transfer of the ammonia molecule from PurQ to PurL. This is Phosphoribosylformylglycinamidine synthase subunit PurL from Nocardioides sp. (strain ATCC BAA-499 / JS614).